The chain runs to 367 residues: THO complex subunit 6 (367 aa).

WD repeat units follow at residues 23 to 67 (IETR…SQSA), 88 to 129 (AHEG…ESDV), 157 to 196 (SPMPEINAMSVDPQSGSVFTAAGDSCAYCWDVESGKIKMT), 199 to 240 (GHSD…KVIG), 243 to 283 (DKKS…CVQT), 285 to 322 (PIPAHVQDVMFDEKQILTVGAEPLLRRFDLNGALLSQI), and 324 to 363 (CAPCSVFSISLHPAGVVAVGGYGGIVDVISQFGSHLCTFR).

The protein belongs to the WD repeat THOC6 family. Component of the THO complex, which is composed of THO1, THO2, THO3, THO5, THO6 and THO7. Interacts with ABI5, DDB1A and DWA2.

Its subcellular location is the nucleus. It functions in the pathway protein modification; protein ubiquitination. Acts as a component of the THO subcomplex of the TREX complex which is thought to couple mRNA transcription, processing and nuclear export. In terms of biological role, component of the CUL4-RBX1-DDB1-DWA1/DWA2 E3 ubiquitin-protein ligase complex that acts as a negative regulator in abscisic acid (ABA) signaling. May function as the substrate recognition module within this complex leading to ABI5 degradation. Functionally redundant with DWA2. The polypeptide is THO complex subunit 6 (THO6) (Arabidopsis thaliana (Mouse-ear cress)).